Consider the following 112-residue polypeptide: UPF0122 protein CPF_1968 (112 aa).

This sequence belongs to the UPF0122 family.

Its function is as follows. Might take part in the signal recognition particle (SRP) pathway. This is inferred from the conservation of its genetic proximity to ftsY/ffh. May be a regulatory protein. The chain is UPF0122 protein CPF_1968 from Clostridium perfringens (strain ATCC 13124 / DSM 756 / JCM 1290 / NCIMB 6125 / NCTC 8237 / Type A).